A 272-amino-acid chain; its full sequence is Cerberus (272 aa).

An N-terminal signal peptide occupies residues 1-19; the sequence is MSLLLLQLLVLSCLGDTEP. Cystine bridges form between Cys168–Cys215, Cys182–Cys229, Cys192–Cys245, and Cys196–Cys247. Residues 168–253 form the CTCK domain; the sequence is CRTLPFSQSV…ECNCETQKIE (86 aa). Residue Asn228 is glycosylated (N-linked (GlcNAc...) asparagine).

Belongs to the DAN family.

The protein localises to the secreted. Functionally, cytokine that acts as a regulator of the activity of Nodal/BMP pathways during the establishment of bilateral asymmetry in the head and trunk of the embryo. This chain is Cerberus (CER1), found in Gallus gallus (Chicken).